Here is a 498-residue protein sequence, read N- to C-terminus: Pyruvate kinase (498 aa).

Arginine 53 serves as a coordination point for substrate. K(+) is bound by residues asparagine 55, serine 57, aspartate 87, and threonine 88. Residue 55–58 (NFSH) participates in ATP binding. ATP contacts are provided by arginine 94 and lysine 178. Glutamate 240 is a binding site for Mg(2+). The substrate site is built by glycine 263, aspartate 264, and threonine 296. Aspartate 264 is a binding site for Mg(2+).

This sequence belongs to the pyruvate kinase family. As to quaternary structure, homotetramer. The cofactor is Mg(2+). K(+) is required as a cofactor.

It carries out the reaction pyruvate + ATP = phosphoenolpyruvate + ADP + H(+). The protein operates within carbohydrate degradation; glycolysis; pyruvate from D-glyceraldehyde 3-phosphate: step 5/5. The protein is Pyruvate kinase (PYK) of Trypanoplasma borreli.